Reading from the N-terminus, the 518-residue chain is MAGYKPVAIQTYPILGEKITQDTLYWNNYKTPVQIKEFGAVSKVDFSPQPPYNYAVTASSRIHIYGRYSQEPIKTFSRFKDTAYCATFRQDGRLLVAGSEDGGVQLFDISGRAPLRQFEGHTKAVHTVDFTADKYHVVSGADDYTVKLWDIPNSKEILTFKEHSDYVRCGCASKLNPDLFITGSYDHTVKMFDARTSESVLSVEHGQPVESVLLFPSGGLLVSAGGRYVKVWDMLKGGQLLVSLKNHHKTVTCLCLSSSGQRLLSGSLDRKVKVYSTTSYKVVHSFDYAASILSLALAHEDETIVVGMTNGILSVKHRKSEAKKESLPRRRRPAYRTFIKGKNYMKQRDDILINRPAKKHLELYDRDLKHFRISKALDRVLDPTCTIKTPEITVSIIKELNRRGVLANALAGRDEKEISHVLNFLIRNLSQPRFAPVLINAAEIIIDIYLPVIGQSPVVDKKFLLLQGLVEKEIDYQRELLETLGMMDMLFATMRRKEGTSVLEHTSDGFPENKKIES.

At alanine 2 the chain carries N-acetylalanine. WD repeat units follow at residues lysine 36–threonine 75, arginine 78–glutamine 117, glycine 120–threonine 159, glutamate 162–serine 202, glutamate 204–valine 242, asparagine 246–serine 285, and aspartate 287–serine 326. A Glycyl lysine isopeptide (Lys-Gly) (interchain with G-Cter in SUMO2) cross-link involves residue lysine 249.

Part of the small subunit (SSU) processome, composed of more than 70 proteins and the RNA chaperone small nucleolar RNA (snoRNA) U3. May be a component of the proposed t-UTP subcomplex of the ribosomal small subunit (SSU) processome containing at least UTP4, WDR43, HEATR1, UTP15, WDR75. Interacts directly with UTP4 and WDR43.

It localises to the nucleus. It is found in the nucleolus. Its function is as follows. Ribosome biogenesis factor. Involved in nucleolar processing of pre-18S ribosomal RNA. Required for optimal pre-ribosomal RNA transcription by RNA polymerase I. Part of the small subunit (SSU) processome, first precursor of the small eukaryotic ribosomal subunit. During the assembly of the SSU processome in the nucleolus, many ribosome biogenesis factors, an RNA chaperone and ribosomal proteins associate with the nascent pre-rRNA and work in concert to generate RNA folding, modifications, rearrangements and cleavage as well as targeted degradation of pre-ribosomal RNA by the RNA exosome. The chain is U3 small nucleolar RNA-associated protein 15 homolog from Homo sapiens (Human).